Consider the following 715-residue polypeptide: Elongation factor G (715 aa).

One can recognise a tr-type G domain in the interval 8 to 290; that stretch reads NRYRNIGICA…AVIDFLPAPT (283 aa). GTP contacts are provided by residues 17–24, 88–92, and 142–145; these read AHVDAGKT, DTPGH, and NKMD.

It belongs to the TRAFAC class translation factor GTPase superfamily. Classic translation factor GTPase family. EF-G/EF-2 subfamily.

The protein localises to the cytoplasm. Catalyzes the GTP-dependent ribosomal translocation step during translation elongation. During this step, the ribosome changes from the pre-translocational (PRE) to the post-translocational (POST) state as the newly formed A-site-bound peptidyl-tRNA and P-site-bound deacylated tRNA move to the P and E sites, respectively. Catalyzes the coordinated movement of the two tRNA molecules, the mRNA and conformational changes in the ribosome. In Pseudomonas fluorescens (strain ATCC BAA-477 / NRRL B-23932 / Pf-5), this protein is Elongation factor G.